Consider the following 956-residue polypeptide: Run domain Beclin-1-interacting and cysteine-rich domain-containing protein (956 aa).

The RUN domain maps to 49–190; that stretch reads WSKYGGLERL…PRLLAQIDAS (142 aa). Positions 50–181 are interaction with PIK3C3; sequence SKYGGLERLC…CLEAVEQNNP (132 aa). A Phosphoserine modification is found at S198. The tract at residues 205–437 is interaction with YWHAB; the sequence is SQSLTALPGS…ITIIVEDPIA (233 aa). The segment covering 233–242 has biased composition (low complexity); that stretch reads SLQSMPQSSH. A disordered region spans residues 233–423; that stretch reads SLQSMPQSSH…TNIASRGAAG (191 aa). Phosphoserine occurs at positions 250 and 268. Residues 270–319 show a composition bias toward polar residues; that stretch reads AETQTTPAPLPSDSTLAQDSPLTAQEMSDSTLTSPLEASWVSSQNDSPSD. An interaction with UVRAG region spans residues 302-585; the sequence is TSPLEASWVS…DLEIQDADIR (284 aa). Positions 339 to 371 are enriched in low complexity; the sequence is ASCESHSSNGESSSSHLFSSSSSQKLESAASSL. A compositionally biased stretch (polar residues) spans 379–395; it reads QSQAGSVLRRSSFSEGQ. Phosphoserine occurs at positions 390, 412, 513, and 547. Residues 490–542 form an interaction with BECN1 region; sequence AIELMKCNMMSQCLEEEEVEEEDSDREIQELKQKIRLRRQQIRTKNLLPAYRE. Residues 547–566 are compositionally biased toward low complexity; the sequence is SFRVTSSSSQFSSRDSTQLS. The tract at residues 547-579 is disordered; sequence SFRVTSSSSQFSSRDSTQLSESGSAEDADDLEI. Residues 552–609 form an interaction with CYBA region; that stretch reads SSSSQFSSRDSTQLSESGSAEDADDLEIQDADIRRSAVSNGKSSFSQNLSHCFLHSTS. The segment covering 570-579 has biased composition (acidic residues); that stretch reads SAEDADDLEI. S655 bears the Phosphoserine mark. The segment at 656–744 is interaction with CARD9; the sequence is PDDGQHADIY…HENAQMVVPS (89 aa). The interaction with Rab7 stretch occupies residues 705–956; that stretch reads CAGCGIRTDP…ALEATVLETT (252 aa).

In terms of assembly, associates with PI3K (PI3KC3/PI3K-III/class III phosphatidylinositol 3-kinase) complex II (PI3KC3-C2) in which the core composed of the catalytic subunit PIK3C3, the regulatory subunit PIK3R4 and BECN1 is associated with UVRAG; in the complex interacts directly with PI3KC3 and UVRAG. Interacts with Rab7 (RAB7A or RAB7B) (GTP-bound form); Rab7 and UVRAG compete for RUBCN binding; can interact simultaneously with Rab7 and the PI3K complex. Interacts with CYBA and CYBB; indicative for the association with the CYBA:CYBB NADPH oxidase heterodimer. Interacts with NOX4 and probably associates with the CYBA:NOX4 complex. Interacts with YWHAB and CARD9 in a competitive and stimulation-dependent manner; RUBCN exchanges interaction from YWHAB to CARD9 upon stimulation with beta-1,3-glucan.

The protein resides in the late endosome. It is found in the lysosome. Its subcellular location is the early endosome. Its function is as follows. Inhibits PIK3C3 activity; under basal conditions negatively regulates PI3K complex II (PI3KC3-C2) function in autophagy. Negatively regulates endosome maturation and degradative endocytic trafficking and impairs autophagosome maturation process. Can sequester UVRAG from association with a class C Vps complex (possibly the HOPS complex) and negatively regulates Rab7 activation. Functionally, involved in regulation of pathogen-specific host defense of activated macrophages. Following bacterial infection promotes NADH oxidase activity by association with CYBA thereby affecting TLR2 signaling and probably other TLR-NOX pathways. Stabilizes the CYBA:CYBB NADPH oxidase heterodimer, increases its association with TLR2 and its phagosome trafficking to induce antimicrobial burst of ROS and production of inflammatory cytokines. Following fungal or viral infection (implicating CLEC7A (dectin-1)-mediated myeloid cell activation or RIGI-dependent sensing of RNA viruses) negatively regulates pro-inflammatory cytokine production by association with CARD9 and sequestering it from signaling complexes. The protein is Run domain Beclin-1-interacting and cysteine-rich domain-containing protein of Mus musculus (Mouse).